A 314-amino-acid polypeptide reads, in one-letter code: BRCA2 and CDKN1A-interacting protein (314 aa).

Residues 1–56 (MASRSKRRAVESGVPQPPDPPVQRDEEEEKEVENEDEDDDDSDKEKDEEDEVIDEE) are disordered. Acidic residues predominate over residues 25–56 (DEEEEKEVENEDEDDDDSDKEKDEEDEVIDEE). Phosphoserine is present on residues S42 and S112. The tract at residues 59-167 (IEFEAYSLSD…EKSMVEQLDK (109 aa)) is interaction with BRCA2. The interval 161–259 (MVEQLDKFLN…NAEEEFFYEK (99 aa)) is interaction with CDKN1A. Position 281 is a phosphoserine (S281).

Belongs to the BCP1 family. As to quaternary structure, interacts with BRCA2, CDKN1A and MTDH/LYRIC. Isoform 2/alpha, but not isoform 1/beta, interacts with DCTN1/p150-glued and ACTR1A/ARP1. Both isoform 1 and isoform 2 interact with alpha-, beta- and gamma-tubulins. Interacts with TENT5C; the interaction has no effect on TENT5C poly(A) polymerase function. In terms of tissue distribution, expressed at high levels in testis and skeletal muscle and at lower levels in brain, heart, kidney, liver, lung, ovary, pancreas, placenta, and spleen.

Its subcellular location is the nucleus. The protein localises to the cytoplasm. The protein resides in the cytoskeleton. It localises to the microtubule organizing center. It is found in the centrosome. Its subcellular location is the centriole. The protein localises to the spindle pole. Functionally, during interphase, required for microtubule organizing and anchoring activities. During mitosis, required for the organization and stabilization of the spindle pole. Isoform 2/alpha is particularly important for the regulation of microtubule anchoring, microtubule stability, spindle architecture and spindle orientation, compared to isoform 1/beta. May promote cell cycle arrest by enhancing the inhibition of CDK2 activity by CDKN1A. May be required for repair of DNA damage by homologous recombination in conjunction with BRCA2. May not be involved in non-homologous end joining (NHEJ). The sequence is that of BRCA2 and CDKN1A-interacting protein (BCCIP) from Homo sapiens (Human).